Reading from the N-terminus, the 1322-residue chain is Centrosome-associated protein Alms1a (1322 aa).

Disordered stretches follow at residues 1–26 (MRAKRGAVGKVMMSGSRHNKLAESSR), 53–135 (TASS…SEVT), 165–193 (SQSAEDIRTPTKSPQMQNKKTQTPESVLK), 252–442 (EEPS…NSVY), 464–614 (KHNQ…GSRP), 657–752 (ESST…ASTD), 814–844 (SKSQKKANTESATAAQIPSSMRCMGDQKERP), 856–911 (AEAE…LNQR), and 1083–1109 (ASATGGAGGSAITRSTTTTTNSSSSMM). Positions 53-62 (TASSGASGST) are enriched in low complexity. Residues 78 to 111 (MEHESRPESGHRRRTKSSDHRSPDERGEAKEQLR) are compositionally biased toward basic and acidic residues. Over residues 165 to 189 (SQSAEDIRTPTKSPQMQNKKTQTPE) the composition is skewed to polar residues. Residues 279 to 292 (SLNSGMESSLSSNK) are compositionally biased toward low complexity. A compositionally biased stretch (polar residues) spans 309 to 318 (EVSSCQTDCR). Low complexity predominate over residues 319–330 (SSSQKESTQGSS). A compositionally biased stretch (polar residues) spans 338 to 350 (NFTTEGTQCSYNR). A compositionally biased stretch (acidic residues) spans 354 to 364 (EIDSIMEEEES). Composition is skewed to basic and acidic residues over residues 365-375 (IDRRKKDDLRI) and 394-408 (SRRESLSSYRRDDSR). Positions 409–430 (LNSPNSSRLGSEVSSRVESSRS) are enriched in low complexity. 3 stretches are compositionally biased toward basic and acidic residues: residues 464-487 (KHNQRRQQEMEVEPKKQLEKEQHQ), 495-512 (PKGRELKDKNHHSGREQQ), and 519-538 (RDQRKAEQRHEKDHQLEREQ). 2 stretches are compositionally biased toward low complexity: residues 594–605 (STGVTASTSTTS) and 657–669 (ESSTSSRSLSSSS). Residues 678–696 (GSLQQVAATNTNQSNARSS) show a composition bias toward polar residues. The span at 714-735 (AIGSSSPLPESVSYSGSTSGSG) shows a compositional bias: low complexity. 2 stretches are compositionally biased toward polar residues: residues 737-751 (VITQKTNIPNRNAST) and 822-832 (TESATAAQIPS). Positions 893–907 (LPAPPPTQPPPPPPH) are enriched in pro residues. The span at 1092–1107 (SAITRSTTTTTNSSSS) shows a compositional bias: low complexity. The interval 1115–1322 (MSVPMGMMNT…ISLNHSMAIM (208 aa)) is interaction with Klp10A. The tract at residues 1190-1309 (SLQDQLQLAR…FNKRLKSRVA (120 aa)) is ALMS motif.

This sequence belongs to the ALMS1 family. Interacts (via C-terminus) with Klp10A. Interacts with SAK. In terms of tissue distribution, expressed in all germlines, including germline stem cells and spermatogonia.

Its subcellular location is the cytoplasm. The protein localises to the cytoskeleton. It is found in the microtubule organizing center. It localises to the centrosome. The protein resides in the centriole. Functionally, in asymmetrically dividing germline stem cells (GSCs), plays a critical role in ensuring centrosome duplication, which is essential for the production of centrosomes and centrioles in all downstream germ cells. Might recruit SAK for daughter centriole duplication. This is Centrosome-associated protein Alms1a from Drosophila melanogaster (Fruit fly).